Consider the following 165-residue polypeptide: Nucleotide-binding protein Suden_0039 (165 aa).

Belongs to the YajQ family.

Nucleotide-binding protein. In Sulfurimonas denitrificans (strain ATCC 33889 / DSM 1251) (Thiomicrospira denitrificans (strain ATCC 33889 / DSM 1251)), this protein is Nucleotide-binding protein Suden_0039.